Reading from the N-terminus, the 402-residue chain is Advanced glycosylation end product-specific receptor (402 aa).

An N-terminal signal peptide occupies residues 1–22; it reads MPTGTVARAWVLVLALWGAVAG. Residues 23–109 enclose the Ig-like V-type domain; the sequence is GQNITARIGE…ATNRLGKEVK (87 aa). Residues 23 to 341 lie on the Extracellular side of the membrane; sequence GQNITARIGE…DGSGLGTLAL (319 aa). N-linked (GlcNAc...) asparagine glycans are attached at residues Asn25 and Asn80. 2 cysteine pairs are disulfide-bonded: Cys38–Cys98 and Cys143–Cys206. Ig-like C2-type domains are found at residues 123–219 and 233–315; these read PEIV…RPLN and PEGI…PPVN. Residues 342–362 form a helical membrane-spanning segment; the sequence is ALGILGGLGIAALLIGAILWR. Over 363–402 the chain is Cytoplasmic; it reads KRQPRLEERKAPESQEDEEERAELNQSEEAEMPENGAGGP. The interval 368–402 is disordered; it reads LEERKAPESQEDEEERAELNQSEEAEMPENGAGGP. Phosphoserine occurs at positions 376 and 389. The segment covering 376–394 has biased composition (acidic residues); the sequence is SQEDEEERAELNQSEEAEM.

As to quaternary structure, constitutive homodimer; disulfide-linked. Forms homooligomers. Interacts with S100A1 and APP. Interacts with S100B, S100A12 and S100A14. Interacts with TIRAP. Interacts with HMGB1. Interacts with LGP2; this interaction plays an important role in AGER-mediated pro-inflammatory responses and cytokine release. Interacts with double-strand break repair protein MRE11 which is a core component of the MRN complex; the interaction enhances MRE11 endonuclease activity and promotes DNA repair. Interacts with the MCM2-7 complex via interaction with complex member MCM2; the interaction is increased following DNA replication stress and stabilizes the MCM2-7 complex at replication forks. Phosphorylated on its cytoplasmic domain by PKCzeta/PRKCZ upon ligand binding. Phosphorylated by ATM following DNA damage. In terms of processing, targeted by the ubiquitin E3 ligase subunit FBXO10 to mediate its ubiquitination and degradation. As to expression, endothelial cells and cardiomyocytes. Expressed in brain.

It is found in the cell membrane. It localises to the cell projection. The protein resides in the phagocytic cup. Its subcellular location is the early endosome. The protein localises to the nucleus. Its function is as follows. Cell surface pattern recognition receptor that senses endogenous stress signals with a broad ligand repertoire including advanced glycation end products, S100 proteins, high-mobility group box 1 protein/HMGB1, amyloid beta/APP oligomers, nucleic acids, histones, phospholipids and glycosaminoglycans. Advanced glycosylation end products are nonenzymatically glycosylated proteins which accumulate in vascular tissue in aging and at an accelerated rate in diabetes. These ligands accumulate at inflammatory sites during the pathogenesis of various diseases including diabetes, vascular complications, neurodegenerative disorders and cancers, and RAGE transduces their binding into pro-inflammatory responses. Upon ligand binding, uses TIRAP and MYD88 as adapters to transduce the signal ultimately leading to the induction of inflammatory cytokines IL6, IL8 and TNFalpha through activation of NF-kappa-B. Interaction with S100A12 on endothelium, mononuclear phagocytes, and lymphocytes triggers cellular activation, with generation of key pro-inflammatory mediators. Interaction with S100B after myocardial infarction may play a role in myocyte apoptosis by activating ERK1/2 and p53/TP53 signaling. Contributes to the translocation of amyloid-beta peptide (ABPP) across the cell membrane from the extracellular to the intracellular space in cortical neurons. ABPP-initiated RAGE signaling, especially stimulation of p38 mitogen-activated protein kinase (MAPK), has the capacity to drive a transport system delivering ABPP as a complex with RAGE to the intraneuronal space. Participates in endothelial albumin transcytosis together with HMGB1 through the RAGE/SRC/Caveolin-1 pathway, leading to endothelial hyperpermeability. Mediates the loading of HMGB1 in extracellular vesicles (EVs) that shuttle HMGB1 to hepatocytes by transferrin-mediated endocytosis and subsequently promote hepatocyte pyroptosis by activating the NLRP3 inflammasome. Binds to DNA and promotes extracellular hypomethylated DNA (CpG DNA) uptake by cells via the endosomal route to activate inflammatory responses. Mediates phagocytosis by non-professional phagocytes (NPP) and this is enhanced by binding to ligands including RNA, DNA, HMGB1 and histones. Promotes NPP-mediated phagocytosis of Saccharomyces cerevisiae spores by binding to RNA attached to the spore wall. Also promotes NPP-mediated phagocytosis of apoptotic cells. Following DNA damage, recruited to DNA double-strand break sites where it colocalizes with the MRN repair complex via interaction with double-strand break repair protein MRE11. Enhances the endonuclease activity of MRE11, promoting the end resection of damaged DNA. Promotes DNA damage repair in trophoblasts which enhances trophoblast invasion and contributes to placental development and maintenance. Protects cells from DNA replication stress by localizing to damaged replication forks where it stabilizes the MCM2-7 complex and promotes faithful progression of the replication fork. This chain is Advanced glycosylation end product-specific receptor (Ager), found in Rattus norvegicus (Rat).